A 554-amino-acid chain; its full sequence is Glutamine--tRNA ligase (554 aa).

Residues 34-44 carry the 'HIGH' region motif; that stretch reads PEPNGYLHIGH. ATP is bound by residues 35-37 and 41-47; these read EPN and HIGHAKS. Asp67 and Tyr212 together coordinate L-glutamine. Residues Thr231, 261–262, and 269–271 contribute to the ATP site; these read RL and MSK. A 'KMSKS' region motif is present at residues 268–272; that stretch reads IMSKR.

This sequence belongs to the class-I aminoacyl-tRNA synthetase family. In terms of assembly, monomer.

The protein resides in the cytoplasm. It carries out the reaction tRNA(Gln) + L-glutamine + ATP = L-glutaminyl-tRNA(Gln) + AMP + diphosphate. The protein is Glutamine--tRNA ligase of Serratia proteamaculans (strain 568).